We begin with the raw amino-acid sequence, 712 residues long: Polyribonucleotide nucleotidyltransferase (712 aa).

Mg(2+) is bound by residues D487 and D493. Residues 554–613 (PRIEVMNIPVDKIREVIGSGGKVIREIVEKTGAKINIEDDGTVKIASSSGKEIEAARKWI) enclose the KH domain. The S1 motif domain occupies 623–691 (GQIYEGTVVK…ERGKVRLSMK (69 aa)).

The protein belongs to the polyribonucleotide nucleotidyltransferase family. Requires Mg(2+) as cofactor.

It localises to the cytoplasm. The catalysed reaction is RNA(n+1) + phosphate = RNA(n) + a ribonucleoside 5'-diphosphate. In terms of biological role, involved in mRNA degradation. Catalyzes the phosphorolysis of single-stranded polyribonucleotides processively in the 3'- to 5'-direction. In Rhizobium etli (strain ATCC 51251 / DSM 11541 / JCM 21823 / NBRC 15573 / CFN 42), this protein is Polyribonucleotide nucleotidyltransferase.